A 318-amino-acid chain; its full sequence is Ferredoxin--NADP reductase (318 aa).

FAD is bound by residues D33, Q41, Y46, V84, F115, D276, and T316.

This sequence belongs to the ferredoxin--NADP reductase type 2 family. Homodimer. FAD is required as a cofactor.

The enzyme catalyses 2 reduced [2Fe-2S]-[ferredoxin] + NADP(+) + H(+) = 2 oxidized [2Fe-2S]-[ferredoxin] + NADPH. This chain is Ferredoxin--NADP reductase, found in Lactobacillus gasseri (strain ATCC 33323 / DSM 20243 / BCRC 14619 / CIP 102991 / JCM 1131 / KCTC 3163 / NCIMB 11718 / NCTC 13722 / AM63).